Here is a 240-residue protein sequence, read N- to C-terminus: MNIKTPSTPNNVDQQEIEKFEAIASRWWDLEGEFQPLHRINPLRLNYILQRSGGIFGKKVLDVGCGGGILSESMAREGADVTGLDMGTEPLQVARLHALETGIPVTYVQETVESHAEKYPQAYDIVTCMEMLEHVPDPQSVVHACAQLVKPGGHVFFSTINRNKKAWLMAVIGAEYILKMVPKGTHDAKKFIRPSELIGWIDRTSLREKHIIGLHYNPLTDKFSLGHNVDVNYMLHSQYV.

4 residues coordinate S-adenosyl-L-methionine: Arg-44, Gly-64, Asp-85, and Met-129.

It belongs to the methyltransferase superfamily. UbiG/COQ3 family.

It carries out the reaction a 3-demethylubiquinol + S-adenosyl-L-methionine = a ubiquinol + S-adenosyl-L-homocysteine + H(+). The catalysed reaction is a 3-(all-trans-polyprenyl)benzene-1,2-diol + S-adenosyl-L-methionine = a 2-methoxy-6-(all-trans-polyprenyl)phenol + S-adenosyl-L-homocysteine + H(+). The protein operates within cofactor biosynthesis; ubiquinone biosynthesis. Its function is as follows. O-methyltransferase that catalyzes the 2 O-methylation steps in the ubiquinone biosynthetic pathway. The protein is Ubiquinone biosynthesis O-methyltransferase of Photorhabdus laumondii subsp. laumondii (strain DSM 15139 / CIP 105565 / TT01) (Photorhabdus luminescens subsp. laumondii).